The sequence spans 175 residues: Sec-independent protein translocase protein TatB (175 aa).

Residues 1–21 form a helical membrane-spanning segment; sequence MFDIGWSELVLIGVVALIAIG. Disordered regions lie at residues 100–132 and 155–175; these read KPAE…PTPE and QAPV…AKAS. Over residues 111–132 the composition is skewed to low complexity; sequence EAPATSSEALTTPTTPEAPTPE.

It belongs to the TatB family. The Tat system comprises two distinct complexes: a TatABC complex, containing multiple copies of TatA, TatB and TatC subunits, and a separate TatA complex, containing only TatA subunits. Substrates initially bind to the TatABC complex, which probably triggers association of the separate TatA complex to form the active translocon.

It is found in the cell inner membrane. Functionally, part of the twin-arginine translocation (Tat) system that transports large folded proteins containing a characteristic twin-arginine motif in their signal peptide across membranes. Together with TatC, TatB is part of a receptor directly interacting with Tat signal peptides. TatB may form an oligomeric binding site that transiently accommodates folded Tat precursor proteins before their translocation. The sequence is that of Sec-independent protein translocase protein TatB from Bradyrhizobium diazoefficiens (strain JCM 10833 / BCRC 13528 / IAM 13628 / NBRC 14792 / USDA 110).